Reading from the N-terminus, the 664-residue chain is Probable L-type lectin-domain containing receptor kinase V.3 (664 aa).

An N-terminal signal peptide occupies residues 1–26; the sequence is MSMSCKINWLMVLVIIALSNLESSLG. At 27 to 278 the chain is on the extracellular side; that stretch reads RLVFEGSAGL…YPKAESQVKL (252 aa). The segment at 28 to 250 is legume-lectin like; it reads LVFEGSAGLM…AIHYMWMWYV (223 aa). 5 N-linked (GlcNAc...) asparagine glycosylation sites follow: N69, N116, N122, N174, and N197. The helical transmembrane segment at 279-299 threads the bilayer; the sequence is IVLVTFLTLALFVALAASALI. Residues 300-664 are Cytoplasmic-facing; sequence VFFYKRHKKL…LPSGRPRLFL (365 aa). Residues 335 to 617 form the Protein kinase domain; it reads NGFKQLLGEG…GVSELPDNLL (283 aa). ATP is bound by residues 341-349 and K364; that span reads LGEGGFGPV. The active-site Proton acceptor is the D461.

In the C-terminal section; belongs to the protein kinase superfamily. Ser/Thr protein kinase family. This sequence in the N-terminal section; belongs to the leguminous lectin family.

It localises to the cell membrane. It carries out the reaction L-seryl-[protein] + ATP = O-phospho-L-seryl-[protein] + ADP + H(+). The catalysed reaction is L-threonyl-[protein] + ATP = O-phospho-L-threonyl-[protein] + ADP + H(+). This chain is Probable L-type lectin-domain containing receptor kinase V.3 (LECRK53), found in Arabidopsis thaliana (Mouse-ear cress).